Here is a 292-residue protein sequence, read N- to C-terminus: MSENDSSESDIEMDPEEEKVYRRQVEESDGFDVDYFRYAGIKPCPLKDENAYTYDIELFGRLGLHCYNLLHEGTNLKLMCIPKYNTNNIGVSSGDYYYITLEAIDTYNNSPCTFQTYVSEWYQTSEHGYLVVETYIARLKGPTGPHNTCIGRGWIWGWEEEAIDVYYKGKLPKWLTKDLLAAAKDEYYVVQESDILENEWLHLYAEIALYSNWKWHATRKSCEESPHLKLKANNAIFYMGFKGSGDHHPSGKHVEYQTIVRKAMDGKPGHIRLEVDSWQAIPSDLIGEDEPP.

Positions M1–E17 are enriched in acidic residues. Residues M1 to Q24 are disordered.

Belongs to the UPF0725 (EMB2204) family.

The protein is UPF0725 protein At4g28920 of Arabidopsis thaliana (Mouse-ear cress).